The chain runs to 290 residues: UPF0761 membrane protein YihY (290 aa).

Helical transmembrane passes span 44 to 64 (LLSLVPLVAVVFALFAAFPMF), 104 to 124 (VGACGLIVTALLLMYSIDSAL), 140 to 160 (FAVYWMILTLGPLLAGASLAI), 183 to 203 (IFPLLLSWISFWLLYSIVPTI), 210 to 230 (AIVGAFVAALLFEAGKKGFAL), and 244 to 264 (VLAVIPILFVWVYWTWCIVLL).

This sequence belongs to the UPF0761 family.

Its subcellular location is the cell inner membrane. The sequence is that of UPF0761 membrane protein YihY from Escherichia coli O139:H28 (strain E24377A / ETEC).